The sequence spans 151 residues: Putative pre-16S rRNA nuclease (151 aa).

It belongs to the YqgF nuclease family.

It is found in the cytoplasm. Its function is as follows. Could be a nuclease involved in processing of the 5'-end of pre-16S rRNA. The protein is Putative pre-16S rRNA nuclease of Bifidobacterium adolescentis (strain ATCC 15703 / DSM 20083 / NCTC 11814 / E194a).